The chain runs to 758 residues: CRISPR system single-strand-specific deoxyribonuclease Cas10/Csm1 (subtype III-A) (758 aa).

Residues 1–82 (MKKEKIDLFY…TYIADNIASG (82 aa)) are HD domain. The GGDEF domain occupies 509–647 (KRLAVVRLDV…EKDSISLFSS (139 aa)).

It belongs to the CRISPR-associated Cas10/Csm1 family. Part of the Csm effector complex that includes at least Cas10(1), Csm2(3), Csm3(5), Csm4(1), Csm5(1) and mature crRNA. The Csm complex is elongated and slightly twisted with a maximal length of 215 Angstroms and a diameter of 75-80 Angstroms. It has been modeled to have a central protein filamant of Csm3 subunits along which the dsRNA helix of paired crRNA and target RNA binds. The filament is capped at one end by Cas10 and Csm4 and at the other end by Csm5; ssDNA is thought to bind to the N-terminal HD domain of Cas10. Csm with a precursor crRNA does not include Csm5, while Cas6, the enzyme probably involved in pre-crRNA processing, is found associated with a subset of the Csm complex. The cofactor is a divalent metal cation.

The catalysed reaction is 6 ATP = cyclic hexaadenylate + 6 diphosphate. With respect to regulation, ssDNase activity is activated by target RNA binding to the Csm-crRNA complex and is inhibited by EDTA. In terms of biological role, CRISPR (clustered regularly interspaced short palindromic repeat) is an adaptive immune system that provides protection against mobile genetic elements (viruses, transposable elements and conjugative plasmids). CRISPR clusters contain spacers, sequences complementary to antecedent mobile elements, and target invading nucleic acids. CRISPR clusters are transcribed and processed into CRISPR RNA (crRNA). The type III-A Csm effector complex binds crRNA and acts as a crRNA-guided RNase, DNase and cyclic oligoadenylate synthase; binding of target RNA cognate to the crRNA is required for all activities. In a heterologous host this Csm effector complex restricts ssRNA phage MS2, suggesting it may target RNA viruses in vivo. Its function is as follows. Csm functions as a non-specific ssDNase. Base-pairing between crRNA and target RNA to form a ternary Csm complex activates a ssDNase activity; target RNA cleavage suppresses the ssDNase, a temporal control that prevents uncontrolled DNA degradation. Viral RNA transcripts probably tether the Csm complex to the viral genome, recruiting Cas10 ssDNA activity which is able to degrade DNA in the transcription bubble, spatially controlling the DNase activity. This subunit has a weak ssDNase activity that is dramatically activated by the ternary Csm effector complex (the crRNA, Cas proteins and a cognate target ssRNA). Target RNA and ssDNA are cleaved simultaneously, although RNase activity (of Csm3) is much faster. RNA cleavage by Csm3 is not required for ssDNase activity as Csm complex with inactive Csm3 still has ssDNase activity; however as the cleaved target RNA products dissociate away ssDNase activity decreases. Self-recognition, with subsequent repression of the ssDNase activity, occurs when the 5' handle of the crRNA bases pairs with the 3' flanking sequence of the target RNA (which would occur if the CRISPR locus were transcribed as an anti-pre-crRNA). This protein has low activity on dsDNA which is not stimulated by the Csm complex. Functionally, this subunit is a single-strand-specific deoxyribonuclease (ssDNase) which digests both linear and circular ssDNA; it has both exo- and endonuclease activity. In terms of biological role, when associated with the ternary Csm effector complex (the crRNA, Cas proteins and a cognate target ssRNA) synthesizes cyclic oligoadenylates (cOA) from ATP, producing cyclic triadenylate (cA3) up to cyclic hexaadenylate (cA6), which is the active cOA. The enzyme is also able to cyclize pppA3 up to pppA6. cOAs are second messengers that induce an antiviral state important for defense against invading nucleic acids. Synthesis of cOA can occur with AMP plus ATP, 2'dATP or 3'dATP (but no other nucleotides), and requires a free 3'-OH ribose moiety. This chain is CRISPR system single-strand-specific deoxyribonuclease Cas10/Csm1 (subtype III-A), found in Streptococcus thermophilus.